The sequence spans 211 residues: MLGKNDPMCLVLVLLGLTALLGICQGGTGCYGSVSRIDTTGASCRTAKPEGLSYCGVRASRTIAERDLGSMNKYKVLIKRVGEALCIEPAVIAGIISRESHAGKILKNGWGDRGNGFGLMQVDKRYHKIEGTWNGEAHIRQGTRILIDMVKKIQRKFPRWTRDQQLKGGISAYNAGVGNVRSYERMDIGTLHDDYSNDVVARAQYFKQHGY.

The signal sequence occupies residues methionine 1–glycine 26. Cystine bridges form between cysteine 30-cysteine 86 and cysteine 44-cysteine 55. Active-site residues include glutamate 99 and aspartate 112.

Belongs to the glycosyl hydrolase 23 family. As to expression, granulocyte compartment of myelomonocytic cells.

The protein localises to the secreted. The enzyme catalyses Hydrolysis of (1-&gt;4)-beta-linkages between N-acetylmuramic acid and N-acetyl-D-glucosamine residues in a peptidoglycan and between N-acetyl-D-glucosamine residues in chitodextrins.. The protein is Lysozyme g of Gallus gallus (Chicken).